The following is a 350-amino-acid chain: Biotin synthase (350 aa).

The Radical SAM core domain occupies 41–268 (NEVQISRLLS…KSRVRLSAGR (228 aa)). [4Fe-4S] cluster is bound by residues Cys-56, Cys-60, and Cys-63. Residues Cys-100, Cys-131, Cys-191, and Arg-263 each coordinate [2Fe-2S] cluster.

It belongs to the radical SAM superfamily. Biotin synthase family. Homodimer. [4Fe-4S] cluster serves as cofactor. Requires [2Fe-2S] cluster as cofactor.

It catalyses the reaction (4R,5S)-dethiobiotin + (sulfur carrier)-SH + 2 reduced [2Fe-2S]-[ferredoxin] + 2 S-adenosyl-L-methionine = (sulfur carrier)-H + biotin + 2 5'-deoxyadenosine + 2 L-methionine + 2 oxidized [2Fe-2S]-[ferredoxin]. The protein operates within cofactor biosynthesis; biotin biosynthesis; biotin from 7,8-diaminononanoate: step 2/2. Catalyzes the conversion of dethiobiotin (DTB) to biotin by the insertion of a sulfur atom into dethiobiotin via a radical-based mechanism. This is Biotin synthase from Shewanella frigidimarina (strain NCIMB 400).